Reading from the N-terminus, the 388-residue chain is Probable peptidoglycan glycosyltransferase FtsW (388 aa).

The Cytoplasmic segment spans residues 1 to 19 (MSAAAPKPRPAHRFHIDQT). A helical membrane pass occupies residues 20–40 (LLSVCLCLLGIGFVMVASSSM). Topologically, residues 41 to 57 (HLGVKMADDVSYYPFKQ) are periplasmic. Residues 58–78 (LVHIILGLMFAAAILAIPMKY) traverse the membrane as a helical segment. Over 79 to 85 (WQKIGQP) the chain is Cytoplasmic. The helical transmembrane segment at 86-106 (LFIVGLVLLLVVLIPGVGVKV) threads the bilayer. Residues 107–117 (NGSTRWLSLLG) are Periplasmic-facing. The helical transmembrane segment at 118 to 137 (LRIQVSEVMKFISVVYMAGY) threads the bilayer. The Cytoplasmic segment spans residues 138–147 (ITRHSDHVRH). The helical transmembrane segment at 148 to 168 (SIFGLLRPLMLLSVASILLLL) threads the bilayer. Residues 169-170 (EP) lie on the Periplasmic side of the membrane. Residues 171–191 (DFGSAVVILIIAMGMMFLGGA) form a helical membrane-spanning segment. Arg-192 is a topological domain (cytoplasmic). A helical transmembrane segment spans residues 193 to 213 (LSPFVALVALISSAGAILASS). Over 214-271 (ADYRVKRMTSFLNPWEHARDSGYQLTQALISFGRGEVSGVGLGNGLQKLFYLPEAHTD) the chain is Periplasmic. A helical membrane pass occupies residues 272-292 (FLFSVLGEELGLVGVTLVIAL). At 293–315 (FTTLVVRGFSIGEQAEAAGERFS) the chain is on the cytoplasmic side. The chain crosses the membrane as a helical span at residues 316 to 336 (ALVAYGLVIWFGFQAFVNMGV). At 337 to 348 (NMGILPTKGLTL) the chain is on the periplasmic side. The helical transmembrane segment at 349–369 (PLMSYGGGSMIVMCGAMAVLF) threads the bilayer. The Cytoplasmic portion of the chain corresponds to 370–388 (RIHYEVTELHKSNIKGKSR).

This sequence belongs to the SEDS family. FtsW subfamily.

The protein localises to the cell inner membrane. The catalysed reaction is [GlcNAc-(1-&gt;4)-Mur2Ac(oyl-L-Ala-gamma-D-Glu-L-Lys-D-Ala-D-Ala)](n)-di-trans,octa-cis-undecaprenyl diphosphate + beta-D-GlcNAc-(1-&gt;4)-Mur2Ac(oyl-L-Ala-gamma-D-Glu-L-Lys-D-Ala-D-Ala)-di-trans,octa-cis-undecaprenyl diphosphate = [GlcNAc-(1-&gt;4)-Mur2Ac(oyl-L-Ala-gamma-D-Glu-L-Lys-D-Ala-D-Ala)](n+1)-di-trans,octa-cis-undecaprenyl diphosphate + di-trans,octa-cis-undecaprenyl diphosphate + H(+). The protein operates within cell wall biogenesis; peptidoglycan biosynthesis. Peptidoglycan polymerase that is essential for cell division. The sequence is that of Probable peptidoglycan glycosyltransferase FtsW from Methylomonas methanica (strain DSM 25384 / MC09).